Reading from the N-terminus, the 261-residue chain is Cytochrome c oxidase subunit 3 (261 aa).

Topologically, residues 1 to 15 (MTRQTHAYHMVNPSP) are mitochondrial matrix. The helical transmembrane segment at 16–34 (WPLTGALSALLMTSGLIMW) threads the bilayer. Topologically, residues 35 to 40 (FHFNST) are mitochondrial intermembrane. The chain crosses the membrane as a helical span at residues 41 to 66 (ILLMLGLTTNMLTMYQWWRDVIREST). Residues 67–72 (FQGHHT) are Mitochondrial matrix-facing. Residues 73–105 (PNVQKGLRYGMILFIISEVLFFTGFFWAFYHSS) traverse the membrane as a helical segment. Residues 106–128 (LAPTPELGGCWPPTGIHPLNPLE) lie on the Mitochondrial intermembrane side of the membrane. The helical transmembrane segment at 129 to 152 (VPLLNTSVLLASGVSITWAHHSLM) threads the bilayer. Topologically, residues 153–155 (EGN) are mitochondrial matrix. A helical membrane pass occupies residues 156–183 (RNHMLQALFITIALGVYFTLLQASEYYE). Residues 184–190 (APFTISD) are Mitochondrial intermembrane-facing. Residues 191–223 (GVYGSTFFVATGFHGLHVIIGSTFLIVCFFRQL) form a helical membrane-spanning segment. Residues 224–232 (KFHFTSNHH) are Mitochondrial matrix-facing. A helical transmembrane segment spans residues 233–256 (FGFEAAAWYWHFVDVVWLFLYVSI). The Mitochondrial intermembrane segment spans residues 257-261 (YWWGS).

This sequence belongs to the cytochrome c oxidase subunit 3 family. Component of the cytochrome c oxidase (complex IV, CIV), a multisubunit enzyme composed of 14 subunits. The complex is composed of a catalytic core of 3 subunits MT-CO1, MT-CO2 and MT-CO3, encoded in the mitochondrial DNA, and 11 supernumerary subunits COX4I, COX5A, COX5B, COX6A, COX6B, COX6C, COX7A, COX7B, COX7C, COX8 and NDUFA4, which are encoded in the nuclear genome. The complex exists as a monomer or a dimer and forms supercomplexes (SCs) in the inner mitochondrial membrane with NADH-ubiquinone oxidoreductase (complex I, CI) and ubiquinol-cytochrome c oxidoreductase (cytochrome b-c1 complex, complex III, CIII), resulting in different assemblies (supercomplex SCI(1)III(2)IV(1) and megacomplex MCI(2)III(2)IV(2)).

The protein localises to the mitochondrion inner membrane. The enzyme catalyses 4 Fe(II)-[cytochrome c] + O2 + 8 H(+)(in) = 4 Fe(III)-[cytochrome c] + 2 H2O + 4 H(+)(out). In terms of biological role, component of the cytochrome c oxidase, the last enzyme in the mitochondrial electron transport chain which drives oxidative phosphorylation. The respiratory chain contains 3 multisubunit complexes succinate dehydrogenase (complex II, CII), ubiquinol-cytochrome c oxidoreductase (cytochrome b-c1 complex, complex III, CIII) and cytochrome c oxidase (complex IV, CIV), that cooperate to transfer electrons derived from NADH and succinate to molecular oxygen, creating an electrochemical gradient over the inner membrane that drives transmembrane transport and the ATP synthase. Cytochrome c oxidase is the component of the respiratory chain that catalyzes the reduction of oxygen to water. Electrons originating from reduced cytochrome c in the intermembrane space (IMS) are transferred via the dinuclear copper A center (CU(A)) of subunit 2 and heme A of subunit 1 to the active site in subunit 1, a binuclear center (BNC) formed by heme A3 and copper B (CU(B)). The BNC reduces molecular oxygen to 2 water molecules using 4 electrons from cytochrome c in the IMS and 4 protons from the mitochondrial matrix. The protein is Cytochrome c oxidase subunit 3 (MT-CO3) of Eudorcas rufifrons (Red-fronted gazelle).